We begin with the raw amino-acid sequence, 191 residues long: UPF0149 protein plu3602 (191 aa).

It belongs to the UPF0149 family.

In Photorhabdus laumondii subsp. laumondii (strain DSM 15139 / CIP 105565 / TT01) (Photorhabdus luminescens subsp. laumondii), this protein is UPF0149 protein plu3602.